A 412-amino-acid polypeptide reads, in one-letter code: Serine hydroxymethyltransferase (412 aa).

Residues leucine 117 and 121–123 (GHL) contribute to the (6S)-5,6,7,8-tetrahydrofolate site. Lysine 226 bears the N6-(pyridoxal phosphate)lysine mark. A (6S)-5,6,7,8-tetrahydrofolate-binding site is contributed by 349-351 (SPF).

The protein belongs to the SHMT family. Homodimer. Requires pyridoxal 5'-phosphate as cofactor.

Its subcellular location is the cytoplasm. The enzyme catalyses (6R)-5,10-methylene-5,6,7,8-tetrahydrofolate + glycine + H2O = (6S)-5,6,7,8-tetrahydrofolate + L-serine. It participates in one-carbon metabolism; tetrahydrofolate interconversion. Its pathway is amino-acid biosynthesis; glycine biosynthesis; glycine from L-serine: step 1/1. In terms of biological role, catalyzes the reversible interconversion of serine and glycine with tetrahydrofolate (THF) serving as the one-carbon carrier. This reaction serves as the major source of one-carbon groups required for the biosynthesis of purines, thymidylate, methionine, and other important biomolecules. Also exhibits THF-independent aldolase activity toward beta-hydroxyamino acids, producing glycine and aldehydes, via a retro-aldol mechanism. This chain is Serine hydroxymethyltransferase, found in Lawsonia intracellularis (strain PHE/MN1-00).